Reading from the N-terminus, the 479-residue chain is Sulfate adenylyltransferase subunit 1 (479 aa).

In terms of domain architecture, tr-type G spans 25 to 239; the sequence is KSLLRFLTCG…EVLETVDIQR (215 aa). The segment at 34–41 is G1; the sequence is GSVDDGKS. Residue 34–41 coordinates GTP; it reads GSVDDGKS. The G2 stretch occupies residues 92 to 96; the sequence is GITID. The interval 113-116 is G3; sequence DTPG. GTP-binding positions include 113–117 and 168–171; these read DTPGH and NKMD. Positions 168 to 171 are G4; it reads NKMD. Residues 206–208 form a G5 region; the sequence is SAL.

This sequence belongs to the TRAFAC class translation factor GTPase superfamily. Classic translation factor GTPase family. CysN/NodQ subfamily. In terms of assembly, heterodimer composed of CysD, the smaller subunit, and CysN.

The enzyme catalyses sulfate + ATP + H(+) = adenosine 5'-phosphosulfate + diphosphate. The protein operates within sulfur metabolism; hydrogen sulfide biosynthesis; sulfite from sulfate: step 1/3. Functionally, with CysD forms the ATP sulfurylase (ATPS) that catalyzes the adenylation of sulfate producing adenosine 5'-phosphosulfate (APS) and diphosphate, the first enzymatic step in sulfur assimilation pathway. APS synthesis involves the formation of a high-energy phosphoric-sulfuric acid anhydride bond driven by GTP hydrolysis by CysN coupled to ATP hydrolysis by CysD. The polypeptide is Sulfate adenylyltransferase subunit 1 (Salmonella typhimurium (strain LT2 / SGSC1412 / ATCC 700720)).